Reading from the N-terminus, the 71-residue chain is UPF0435 protein SE_1565 (71 aa).

This sequence belongs to the UPF0435 family.

In Staphylococcus epidermidis (strain ATCC 12228 / FDA PCI 1200), this protein is UPF0435 protein SE_1565.